A 436-amino-acid polypeptide reads, in one-letter code: MVNRSDLVVIGISVGLALGLLLALLLFFAIKWYYGRSHLRRCANEQNSPTLPVHTAKRGVVIPDDRANTESSQPPENGAPTQHQPWWNNHTKDLTVSASGIPRYNYKDIQKATQNFTTVLGQGSFGPVYKAVMPNGELAAAKVHGSNSSQGDREFQTEVSLLGRLHHRNLVNLTGYCVDKSHRMLIYEFMSNGSLENLLYGGEGMQVLNWEERLQIALDISHGIEYLHEGAVPPVIHRDLKSANILLDHSMRAKVADFGLSKEMVLDRMTSGLKGTHGYMDPTYISTNKYTMKSDIYSFGVIILELITAIHPQQNLMEYINLASMSPDGIDEILDQKLVGNASIEEVRLLAKIANRCVHKTPRKRPSIGEVTQFILKIKQSRSRGRRQDTMSSSFGVGYEEDLSRVMSRIKDQHVELGLLAGVKEENHQERNIATT.

Residues 7 to 34 (LVVIGISVGLALGLLLALLLFFAIKWYY) traverse the membrane as a helical segment. Positions 65–88 (DRANTESSQPPENGAPTQHQPWWN) are disordered. The segment covering 69-88 (TESSQPPENGAPTQHQPWWN) has biased composition (polar residues). The region spanning 114–375 (QNFTTVLGQG…PSIGEVTQFI (262 aa)) is the Protein kinase domain. Residues 120 to 128 (LGQGSFGPV) and Lys142 contribute to the ATP site. A Phosphotyrosine modification is found at Tyr187. The Proton acceptor role is filled by Asp239. The residue at position 276 (Thr276) is a Phosphothreonine. Phosphotyrosine is present on Tyr284.

Belongs to the protein kinase superfamily. Ser/Thr protein kinase family.

Its subcellular location is the cell membrane. The catalysed reaction is L-seryl-[protein] + ATP = O-phospho-L-seryl-[protein] + ADP + H(+). It catalyses the reaction L-threonyl-[protein] + ATP = O-phospho-L-threonyl-[protein] + ADP + H(+). This is Calcium/calmodulin-regulated receptor-like kinase 2 from Arabidopsis thaliana (Mouse-ear cress).